A 311-amino-acid chain; its full sequence is Aspartate carbamoyltransferase catalytic subunit (311 aa).

2 residues coordinate carbamoyl phosphate: R55 and T56. K85 lines the L-aspartate pocket. Carbamoyl phosphate contacts are provided by R106, H135, and Q138. L-aspartate contacts are provided by R168 and R230. The carbamoyl phosphate site is built by L268 and P269.

This sequence belongs to the aspartate/ornithine carbamoyltransferase superfamily. ATCase family. Heterododecamer (2C3:3R2) of six catalytic PyrB chains organized as two trimers (C3), and six regulatory PyrI chains organized as three dimers (R2).

It carries out the reaction carbamoyl phosphate + L-aspartate = N-carbamoyl-L-aspartate + phosphate + H(+). The protein operates within pyrimidine metabolism; UMP biosynthesis via de novo pathway; (S)-dihydroorotate from bicarbonate: step 2/3. Catalyzes the condensation of carbamoyl phosphate and aspartate to form carbamoyl aspartate and inorganic phosphate, the committed step in the de novo pyrimidine nucleotide biosynthesis pathway. The chain is Aspartate carbamoyltransferase catalytic subunit from Salmonella paratyphi C (strain RKS4594).